Reading from the N-terminus, the 54-residue chain is Protein P32 (54 aa).

The chain crosses the membrane as a helical span at residues 4-24 (FGKTLITIVTAIIGVAIIAVI).

The protein resides in the virion membrane. In terms of biological role, component of the phage injection machinery. Required for DNA injection in the membrane transformation event. Involved in the formation of the membrane tail tube to connect the virus interior with the host cytosol. Essential for viral infectivity. In Enterobacteria phage PRD1 (Bacteriophage PRD1), this protein is Protein P32 (XXXII).